Consider the following 130-residue polypeptide: Ribonuclease P protein component 2 (130 aa).

It belongs to the eukaryotic/archaeal RNase P protein component 2 family. As to quaternary structure, consists of a catalytic RNA component and at least 5 protein subunits.

It localises to the cytoplasm. The catalysed reaction is Endonucleolytic cleavage of RNA, removing 5'-extranucleotides from tRNA precursor.. Its function is as follows. Part of ribonuclease P, a protein complex that generates mature tRNA molecules by cleaving their 5'-ends. This Methanococcus maripaludis (strain DSM 14266 / JCM 13030 / NBRC 101832 / S2 / LL) protein is Ribonuclease P protein component 2.